Consider the following 63-residue polypeptide: Large ribosomal subunit protein bL32 (63 aa).

Residues 1–20 form a disordered region; the sequence is MANPKAKMSKSRRDKRRAQF. Residues 7–18 are compositionally biased toward basic residues; the sequence is KMSKSRRDKRRA.

It belongs to the bacterial ribosomal protein bL32 family.

This chain is Large ribosomal subunit protein bL32, found in Chlorobaculum tepidum (strain ATCC 49652 / DSM 12025 / NBRC 103806 / TLS) (Chlorobium tepidum).